Consider the following 727-residue polypeptide: Putative inactive disease susceptibility protein LOV1 (727 aa).

An NB-ARC domain is found at 44-336 (EQSVEALAGH…AAEGIITSSD (293 aa)). LRR repeat units lie at residues 459 to 484 (LPLL…IGDL), 485 to 507 (IHLR…LRNL), 509 to 530 (LLLY…LKEM), 575 to 600 (MTKL…LGQL), and 601 to 626 (RSLE…IVLN).

The protein belongs to the disease resistance NB-LRR family. RPP8/HRT subfamily.

The chain is Putative inactive disease susceptibility protein LOV1 (LOV1) from Arabidopsis thaliana (Mouse-ear cress).